A 766-amino-acid polypeptide reads, in one-letter code: BMP/retinoic acid-inducible neural-specific protein 3 (766 aa).

Positions 1-33 (MIWRSRAGAELFSLMALWEWIALSLHCWVLAVA) are cleaved as a signal peptide. Residues 74–264 (RYKIYREFGR…FVQAALSYIA (191 aa)) form the MACPF domain. N-linked (GlcNAc...) asparagine glycans are attached at residues Asn-168, Asn-337, Asn-456, Asn-562, Asn-609, and Asn-641.

This sequence belongs to the BRINP family. Strongly expressed in oral keratinocytes compared to the weak expression in tongue squamous cell carcinoma (SCC). Expressed in endothelial and aortic smooth muscle cells. Overexpressed in gonadotropinomas compared to normal pituitarie tissues.

It is found in the secreted. The protein localises to the mitochondrion. Functionally, inhibits neuronal cell proliferation by negative regulation of the cell cycle transition. Promotes pituitary gonadotrope cell proliferation, migration and invasion, when overexpressed. May play a role in cell pituitary tumor development. This is BMP/retinoic acid-inducible neural-specific protein 3 (BRINP3) from Homo sapiens (Human).